The primary structure comprises 355 residues: Nicotinate-nucleotide--dimethylbenzimidazole phosphoribosyltransferase (355 aa).

Catalysis depends on glutamate 321, which acts as the Proton acceptor.

It belongs to the CobT family.

The enzyme catalyses 5,6-dimethylbenzimidazole + nicotinate beta-D-ribonucleotide = alpha-ribazole 5'-phosphate + nicotinate + H(+). It participates in nucleoside biosynthesis; alpha-ribazole biosynthesis; alpha-ribazole from 5,6-dimethylbenzimidazole: step 1/2. Catalyzes the synthesis of alpha-ribazole-5'-phosphate from nicotinate mononucleotide (NAMN) and 5,6-dimethylbenzimidazole (DMB). The chain is Nicotinate-nucleotide--dimethylbenzimidazole phosphoribosyltransferase from Desulfotalea psychrophila (strain LSv54 / DSM 12343).